A 184-amino-acid polypeptide reads, in one-letter code: uncharacterized protein (184 aa).

The disordered stretch occupies residues 146–177 (HPKTSLAQQPNAKATQPPLSKETLNTAKETDP). Residues 150-172 (SLAQQPNAKATQPPLSKETLNTA) show a composition bias toward polar residues.

This is an uncharacterized protein from Picosynechococcus sp. (strain ATCC 27264 / PCC 7002 / PR-6) (Agmenellum quadruplicatum).